The chain runs to 341 residues: Chorismate synthase (341 aa).

2 disordered regions span residues L45–E64 and H109–T134. R48 serves as a coordination point for NADP(+). FMN contacts are provided by residues R128–S130, G280, K295–S299, and R308.

This sequence belongs to the chorismate synthase family. In terms of assembly, homotetramer. It depends on FMNH2 as a cofactor.

It carries out the reaction 5-O-(1-carboxyvinyl)-3-phosphoshikimate = chorismate + phosphate. The protein operates within metabolic intermediate biosynthesis; chorismate biosynthesis; chorismate from D-erythrose 4-phosphate and phosphoenolpyruvate: step 7/7. In terms of biological role, catalyzes the anti-1,4-elimination of the C-3 phosphate and the C-6 proR hydrogen from 5-enolpyruvylshikimate-3-phosphate (EPSP) to yield chorismate, which is the branch point compound that serves as the starting substrate for the three terminal pathways of aromatic amino acid biosynthesis. This reaction introduces a second double bond into the aromatic ring system. This chain is Chorismate synthase, found in Bdellovibrio bacteriovorus (strain ATCC 15356 / DSM 50701 / NCIMB 9529 / HD100).